Reading from the N-terminus, the 247-residue chain is PF03932 family protein CutC (247 aa).

Belongs to the CutC family.

The protein localises to the cytoplasm. The sequence is that of PF03932 family protein CutC from Klebsiella pneumoniae (strain 342).